Here is a 187-residue protein sequence, read N- to C-terminus: Putative protein SSX8 (187 aa).

Disordered regions lie at residues 1 to 21 (MNGDDAFAKRPRDDDKASEKR) and 109 to 187 (PKIM…EDDE). In terms of domain architecture, KRAB-related spans 20 to 83 (KRSKAFNDIA…KQATDFQGNY (64 aa)). Position 123 is a phosphoserine (Ser-123). The span at 152–168 (KRSGPKRGRHAWTHRLR) shows a compositional bias: basic residues.

The protein belongs to the SSX family. In terms of tissue distribution, not detected in any normal or tumor tissues.

Its function is as follows. Could act as a modulator of transcription. This is Putative protein SSX8 from Homo sapiens (Human).